Reading from the N-terminus, the 454-residue chain is B-cell lymphoma 3 protein (454 aa).

The tract at residues 1-50 is disordered; that stretch reads MPRCPAGAMDEGPVDLRTRPKAAGLPGAALPLRKRPLRAPSPEPAAPRGA. Low complexity predominate over residues 21 to 31; sequence KAAGLPGAALP. A Phosphoserine modification is found at S41. 7 ANK repeats span residues 134–163, 171–200, 204–235, 241–270, 275–304, 308–337, and 338–367; these read DGDTPLHIAVVQGNLPAVHRLVNLFQQGGR, LRQTPLHLAVITTLPSVVRLLVTAGASPMA, HGQTAAHLACEHRSPTCLRALLDSAAPGTLDL, DGLTALHVAVNTECQETVQLLLERGADIDA, SGRSPLIHAVENNSLSMVQLLLQHGANVNA, SGSSALHSASGRGLLPLVRTLVRSGADSSL, and KNCHNDTPLMVARSRRVIDILRGKATRPAS. Positions 360–454 are disordered; sequence GKATRPASTS…VPPSPAPGGS (95 aa). Residues 365 to 381 show a composition bias toward polar residues; sequence PASTSQPDPSPDRSANT. S374 bears the Phosphoserine mark. The span at 382 to 404 shows a compositional bias: low complexity; the sequence is SPESSSRLSSNGLLSASPSSSPS. S402 and S406 each carry phosphoserine; by GSK3. Residues 405–418 show a composition bias toward pro residues; sequence QSPPRDPPGFPMAP. The segment covering 432–442 has biased composition (low complexity); it reads LPFAGVLRGPG. Positions 443-454 are enriched in pro residues; it reads RPVPPSPAPGGS.

Component of a complex consisting of the NF-kappa-B p52-p52 homodimer and BCL3. Component of a complex consisting of the NF-kappa-B p50-p50 homodimer and BCL3. Interacts with N4BP2, COPS5 and PIR. Interacts with CYLD. Polyubiquitinated. Ubiquitination via 'Lys-63'-linked ubiquitin chains is required for nuclear accumulation. Deubiquitinated by CYLD, which acts on 'Lys-63'-linked ubiquitin chains. Deubiquitination by CYLD prevents nuclear accumulation. In terms of processing, activated by phosphorylation.

The protein localises to the nucleus. It localises to the cytoplasm. It is found in the perinuclear region. Functionally, contributes to the regulation of transcriptional activation of NF-kappa-B target genes. In the cytoplasm, inhibits the nuclear translocation of the NF-kappa-B p50 subunit. In the nucleus, acts as transcriptional activator that promotes transcription of NF-kappa-B target genes. Contributes to the regulation of cell proliferation. In Homo sapiens (Human), this protein is B-cell lymphoma 3 protein (BCL3).